The chain runs to 505 residues: Flagellin (505 aa).

Belongs to the bacterial flagellin family.

It is found in the secreted. It localises to the bacterial flagellum. Flagellin is the subunit protein which polymerizes to form the filaments of bacterial flagella. This Salmonella enteritidis protein is Flagellin (fliC).